The following is a 501-amino-acid chain: Lysine--tRNA ligase (501 aa).

Glu-411 and Glu-418 together coordinate Mg(2+).

This sequence belongs to the class-II aminoacyl-tRNA synthetase family. In terms of assembly, homodimer. The cofactor is Mg(2+).

It localises to the cytoplasm. It carries out the reaction tRNA(Lys) + L-lysine + ATP = L-lysyl-tRNA(Lys) + AMP + diphosphate. This Pseudomonas aeruginosa (strain LESB58) protein is Lysine--tRNA ligase.